Consider the following 209-residue polypeptide: Large ribosomal subunit protein uL3 (209 aa).

Gln-150 is modified (N5-methylglutamine).

This sequence belongs to the universal ribosomal protein uL3 family. Part of the 50S ribosomal subunit. Forms a cluster with proteins L14 and L19. Methylated by PrmB.

Functionally, one of the primary rRNA binding proteins, it binds directly near the 3'-end of the 23S rRNA, where it nucleates assembly of the 50S subunit. The protein is Large ribosomal subunit protein uL3 of Salmonella arizonae (strain ATCC BAA-731 / CDC346-86 / RSK2980).